Reading from the N-terminus, the 508-residue chain is Heat shock 70 kDa protein 14 (508 aa).

Belongs to the heat shock protein 70 family. In terms of assembly, component of ribosome-associated complex (RAC).

It localises to the cytoplasm. The protein localises to the cytosol. Functionally, component of the ribosome-associated complex (RAC), a complex involved in folding or maintaining nascent polypeptides in a folding-competent state. The protein is Heat shock 70 kDa protein 14 (hspa14) of Xenopus tropicalis (Western clawed frog).